The chain runs to 281 residues: N-acetylmuramic acid 6-phosphate etherase (281 aa).

An SIS domain is found at Ile63–Arg226. Residue Glu91 is the Proton donor of the active site. Residue Glu122 is part of the active site.

It belongs to the GCKR-like family. MurNAc-6-P etherase subfamily. Homodimer.

It carries out the reaction N-acetyl-D-muramate 6-phosphate + H2O = N-acetyl-D-glucosamine 6-phosphate + (R)-lactate. It functions in the pathway amino-sugar metabolism; N-acetylmuramate degradation. In terms of biological role, specifically catalyzes the cleavage of the D-lactyl ether substituent of MurNAc 6-phosphate, producing GlcNAc 6-phosphate and D-lactate. In Bacteroides fragilis (strain YCH46), this protein is N-acetylmuramic acid 6-phosphate etherase.